Consider the following 198-residue polypeptide: Sporulation-specific protein 16 (198 aa).

In terms of biological role, necessary for efficient spore formation. In Saccharomyces cerevisiae (strain ATCC 204508 / S288c) (Baker's yeast), this protein is Sporulation-specific protein 16 (SPO16).